Consider the following 203-residue polypeptide: Peptide deformylase (203 aa).

Residues Cys-121 and His-163 each contribute to the Fe cation site. The active site involves Glu-164. His-167 is a binding site for Fe cation.

This sequence belongs to the polypeptide deformylase family. Requires Fe(2+) as cofactor.

It catalyses the reaction N-terminal N-formyl-L-methionyl-[peptide] + H2O = N-terminal L-methionyl-[peptide] + formate. In terms of biological role, removes the formyl group from the N-terminal Met of newly synthesized proteins. Requires at least a dipeptide for an efficient rate of reaction. N-terminal L-methionine is a prerequisite for activity but the enzyme has broad specificity at other positions. In Prochlorococcus marinus (strain SARG / CCMP1375 / SS120), this protein is Peptide deformylase.